Consider the following 1037-residue polypeptide: Multidrug resistance protein MdtF (1037 aa).

At 1–9 (MANYFIDRP) the chain is on the cytoplasmic side. The helical transmembrane segment at 10 to 28 (VFAWVLAIIMMLAGGLAIM) threads the bilayer. Over 29-339 (NLPVAQYPQI…TPFIEISIQE (311 aa)) the chain is Periplasmic. The helical transmembrane segment at 340–359 (VFKTLVEAIILVFLVMYLFL) threads the bilayer. Residues 360-365 (QNFRAT) are Cytoplasmic-facing. A helical membrane pass occupies residues 366–385 (IIPTIAVPVVILGTFAILSA). Residues 386–391 (VGFTIN) are Periplasmic-facing. Residues 392-413 (TLTMFGMVLAIGLLVDDAIVVV) form a helical membrane-spanning segment. Topologically, residues 414-441 (ENVERVIAEDKLPPKEATHKSMGQIQRA) are cytoplasmic. Residues 442-460 (LVGIAVVLSAVFMPMAFMS) form a helical membrane-spanning segment. Over 461–473 (GATGEIYRQFSIT) the chain is Periplasmic. The helical transmembrane segment at 474–496 (LISSMLLSVFVAMSLTPALCATI) threads the bilayer. Residues 497 to 536 (LKAAPEGGHKPNALFARFNTLFEKSTQHYTDSTRSLLRCT) lie on the Cytoplasmic side of the membrane. The chain crosses the membrane as a helical span at residues 537-555 (GRYMVVYLLICAGMAVLFL). The Periplasmic segment spans residues 556 to 870 (RTPTSFLPEE…SYQEALSSNQ (315 aa)). A helical transmembrane segment spans residues 871–890 (APALYAISLVVVFLALAALY). Residues 891 to 896 (ESWSIP) are Cytoplasmic-facing. The helical transmembrane segment at 897 to 916 (FSVMLVVPLGVVGALLATDL) threads the bilayer. Residues 917–922 (RGLSND) lie on the Periplasmic side of the membrane. The chain crosses the membrane as a helical span at residues 923-944 (VYFQVGLLTTIGLSAKNAILIV). The Cytoplasmic segment spans residues 945–972 (EFAVEMMQKEGKTPIEAIIEAARMRLRP). Residues 973–991 (ILMTSLAFILGVLPLVISH) traverse the membrane as a helical segment. At 992–1004 (GAGSGAQNAVGTG) the chain is on the periplasmic side. The chain crosses the membrane as a helical span at residues 1005–1027 (VMGGMFAATVLAIYFVPVFFVVV). Over 1028-1037 (EHLFARFKKA) the chain is Cytoplasmic.

It belongs to the resistance-nodulation-cell division (RND) (TC 2.A.6) family. In terms of assembly, homotrimer. Part of the tripartite efflux system MdtEF-TolC, which is composed of an inner membrane transporter, MdtF, a membrane fusion protein, MdtE, and an outer membrane component, TolC. The complex forms a large protein conduit and can translocate molecules across both the inner and outer membranes.

It localises to the cell inner membrane. Functionally, part of the tripartite efflux system MdtEF-TolC, which confers resistance to compounds such as rhodamine 6G, erythromycin, doxorubicin, ethidium bromide, TPP, SDS, deoxycholate, crystal violet and benzalkonium. The sequence is that of Multidrug resistance protein MdtF (mdtF) from Escherichia coli (strain K12).